A 116-amino-acid chain; its full sequence is Iron-sulfur cluster insertion protein ErpA (116 aa).

3 residues coordinate iron-sulfur cluster: C44, C108, and C110.

The protein belongs to the HesB/IscA family. As to quaternary structure, homodimer. Iron-sulfur cluster serves as cofactor.

Its function is as follows. Required for insertion of 4Fe-4S clusters for at least IspG. The polypeptide is Iron-sulfur cluster insertion protein ErpA (Shewanella halifaxensis (strain HAW-EB4)).